The primary structure comprises 446 residues: Xylose isomerase 1 (446 aa).

Active-site residues include histidine 109 and aspartate 112. Mg(2+) is bound by residues glutamate 240, glutamate 276, histidine 279, aspartate 304, aspartate 315, aspartate 317, and aspartate 347.

It belongs to the xylose isomerase family. Homotetramer. It depends on Mg(2+) as a cofactor.

It is found in the cytoplasm. The enzyme catalyses alpha-D-xylose = alpha-D-xylulofuranose. The protein is Xylose isomerase 1 of Xanthomonas campestris pv. campestris (strain 8004).